We begin with the raw amino-acid sequence, 541 residues long: Light-independent protochlorophyllide reductase subunit B (541 aa).

A [4Fe-4S] cluster-binding site is contributed by aspartate 36. The active-site Proton donor is the aspartate 287. 422–423 is a binding site for substrate; the sequence is GL.

The protein belongs to the ChlB/BchB/BchZ family. In terms of assembly, protochlorophyllide reductase is composed of three subunits; BchL, BchN and BchB. Forms a heterotetramer of two BchB and two BchN subunits. The cofactor is [4Fe-4S] cluster.

It catalyses the reaction chlorophyllide a + oxidized 2[4Fe-4S]-[ferredoxin] + 2 ADP + 2 phosphate = protochlorophyllide a + reduced 2[4Fe-4S]-[ferredoxin] + 2 ATP + 2 H2O. Its pathway is porphyrin-containing compound metabolism; bacteriochlorophyll biosynthesis (light-independent). In terms of biological role, component of the dark-operative protochlorophyllide reductase (DPOR) that uses Mg-ATP and reduced ferredoxin to reduce ring D of protochlorophyllide (Pchlide) to form chlorophyllide a (Chlide). This reaction is light-independent. The NB-protein (BchN-BchB) is the catalytic component of the complex. The protein is Light-independent protochlorophyllide reductase subunit B of Rhodopseudomonas palustris (strain HaA2).